The primary structure comprises 382 residues: Galactokinase (382 aa).

34–37 (EHTD) is a binding site for substrate. 124-130 (GAGLSSS) serves as a coordination point for ATP. Mg(2+) is bound by residues serine 130 and glutamate 162. Aspartate 174 functions as the Proton acceptor in the catalytic mechanism. Tyrosine 223 is a substrate binding site.

It belongs to the GHMP kinase family. GalK subfamily.

It is found in the cytoplasm. The catalysed reaction is alpha-D-galactose + ATP = alpha-D-galactose 1-phosphate + ADP + H(+). It participates in carbohydrate metabolism; galactose metabolism. In terms of biological role, catalyzes the transfer of the gamma-phosphate of ATP to D-galactose to form alpha-D-galactose-1-phosphate (Gal-1-P). The protein is Galactokinase of Escherichia coli O157:H7 (strain EC4115 / EHEC).